The chain runs to 955 residues: 2-oxoglutarate dehydrogenase E1 component (955 aa).

The protein belongs to the alpha-ketoglutarate dehydrogenase family. As to quaternary structure, homodimer. Part of the 2-oxoglutarate dehydrogenase (OGDH) complex composed of E1 (2-oxoglutarate dehydrogenase), E2 (dihydrolipoamide succinyltransferase) and E3 (dihydrolipoamide dehydrogenase); the complex contains multiple copies of the three enzymatic components (E1, E2 and E3). Requires thiamine diphosphate as cofactor.

It catalyses the reaction N(6)-[(R)-lipoyl]-L-lysyl-[protein] + 2-oxoglutarate + H(+) = N(6)-[(R)-S(8)-succinyldihydrolipoyl]-L-lysyl-[protein] + CO2. E1 component of the 2-oxoglutarate dehydrogenase (OGDH) complex which catalyzes the decarboxylation of 2-oxoglutarate, the first step in the conversion of 2-oxoglutarate to succinyl-CoA and CO(2). In Bacillus cereus (strain ZK / E33L), this protein is 2-oxoglutarate dehydrogenase E1 component.